A 336-amino-acid chain; its full sequence is Holliday junction branch migration complex subunit RuvB (336 aa).

Positions 4–184 (ADRLISATGV…FGIVQRLEFY (181 aa)) are large ATPase domain (RuvB-L). ATP-binding positions include Ile23, Arg24, Gly65, Lys68, Thr69, Thr70, 131 to 133 (EDY), Arg174, Tyr184, and Arg221. Thr69 serves as a coordination point for Mg(2+). The tract at residues 185 to 255 (NVKDLTDIVS…IAARAMDMLD (71 aa)) is small ATPAse domain (RuvB-S). Residues 258-336 (NEGFDFMDRK…HFGLQRPDER (79 aa)) form a head domain (RuvB-H) region. DNA-binding residues include Arg313 and Arg318.

This sequence belongs to the RuvB family. Homohexamer. Forms an RuvA(8)-RuvB(12)-Holliday junction (HJ) complex. HJ DNA is sandwiched between 2 RuvA tetramers; dsDNA enters through RuvA and exits via RuvB. An RuvB hexamer assembles on each DNA strand where it exits the tetramer. Each RuvB hexamer is contacted by two RuvA subunits (via domain III) on 2 adjacent RuvB subunits; this complex drives branch migration. In the full resolvosome a probable DNA-RuvA(4)-RuvB(12)-RuvC(2) complex forms which resolves the HJ.

It localises to the cytoplasm. The catalysed reaction is ATP + H2O = ADP + phosphate + H(+). Its function is as follows. The RuvA-RuvB-RuvC complex processes Holliday junction (HJ) DNA during genetic recombination and DNA repair, while the RuvA-RuvB complex plays an important role in the rescue of blocked DNA replication forks via replication fork reversal (RFR). RuvA specifically binds to HJ cruciform DNA, conferring on it an open structure. The RuvB hexamer acts as an ATP-dependent pump, pulling dsDNA into and through the RuvAB complex. RuvB forms 2 homohexamers on either side of HJ DNA bound by 1 or 2 RuvA tetramers; 4 subunits per hexamer contact DNA at a time. Coordinated motions by a converter formed by DNA-disengaged RuvB subunits stimulates ATP hydrolysis and nucleotide exchange. Immobilization of the converter enables RuvB to convert the ATP-contained energy into a lever motion, pulling 2 nucleotides of DNA out of the RuvA tetramer per ATP hydrolyzed, thus driving DNA branch migration. The RuvB motors rotate together with the DNA substrate, which together with the progressing nucleotide cycle form the mechanistic basis for DNA recombination by continuous HJ branch migration. Branch migration allows RuvC to scan DNA until it finds its consensus sequence, where it cleaves and resolves cruciform DNA. The sequence is that of Holliday junction branch migration complex subunit RuvB from Aeromonas salmonicida (strain A449).